The sequence spans 194 residues: Holliday junction branch migration complex subunit RuvA (194 aa).

Residues 1–63 (MFEYLKGTVA…EDELSLYGFM (63 aa)) form a domain I region. The tract at residues 64-142 (SIEELDMFQK…KTNVVYDYTL (79 aa)) is domain II. Residues 143–151 (FNDDHKDDD) are flexible linker. A domain III region spans residues 151 to 194 (DEAVQALMALGYSKLESEKAVEAVRDMSLGTEDVIKRALKWLMK).

The protein belongs to the RuvA family. Homotetramer. Forms an RuvA(8)-RuvB(12)-Holliday junction (HJ) complex. HJ DNA is sandwiched between 2 RuvA tetramers; dsDNA enters through RuvA and exits via RuvB. An RuvB hexamer assembles on each DNA strand where it exits the tetramer. Each RuvB hexamer is contacted by two RuvA subunits (via domain III) on 2 adjacent RuvB subunits; this complex drives branch migration. In the full resolvosome a probable DNA-RuvA(4)-RuvB(12)-RuvC(2) complex forms which resolves the HJ.

The protein localises to the cytoplasm. The RuvA-RuvB-RuvC complex processes Holliday junction (HJ) DNA during genetic recombination and DNA repair, while the RuvA-RuvB complex plays an important role in the rescue of blocked DNA replication forks via replication fork reversal (RFR). RuvA specifically binds to HJ cruciform DNA, conferring on it an open structure. The RuvB hexamer acts as an ATP-dependent pump, pulling dsDNA into and through the RuvAB complex. HJ branch migration allows RuvC to scan DNA until it finds its consensus sequence, where it cleaves and resolves the cruciform DNA. This Alkaliphilus oremlandii (strain OhILAs) (Clostridium oremlandii (strain OhILAs)) protein is Holliday junction branch migration complex subunit RuvA.